Reading from the N-terminus, the 555-residue chain is Formate--tetrahydrofolate ligase (555 aa).

65–72 is a binding site for ATP; sequence TPAGEGKS.

Belongs to the formate--tetrahydrofolate ligase family.

The enzyme catalyses (6S)-5,6,7,8-tetrahydrofolate + formate + ATP = (6R)-10-formyltetrahydrofolate + ADP + phosphate. It functions in the pathway one-carbon metabolism; tetrahydrofolate interconversion. This is Formate--tetrahydrofolate ligase from Staphylococcus aureus (strain COL).